A 358-amino-acid polypeptide reads, in one-letter code: Alanine racemase (358 aa).

Catalysis depends on K35, which acts as the Proton acceptor; specific for D-alanine. An N6-(pyridoxal phosphate)lysine modification is found at K35. R130 contributes to the substrate binding site. Y255 (proton acceptor; specific for L-alanine) is an active-site residue. M303 serves as a coordination point for substrate.

The protein belongs to the alanine racemase family. The cofactor is pyridoxal 5'-phosphate.

The enzyme catalyses L-alanine = D-alanine. The protein operates within amino-acid biosynthesis; D-alanine biosynthesis; D-alanine from L-alanine: step 1/1. Functionally, catalyzes the interconversion of L-alanine and D-alanine. May also act on other amino acids. In Shewanella sp. (strain MR-7), this protein is Alanine racemase (alr).